The following is a 430-amino-acid chain: Gustatory receptor-like 43a (430 aa).

Residues 1 to 31 are Cytoplasmic-facing; sequence MSTGSHSPEAMWSATNFRRHQRKPNQVLHRW. Residues 32–52 form a helical membrane-spanning segment; it reads FFKGSAWIIYAIACGLHFFKL. The Extracellular segment spans residues 53 to 79; it reads HYNERTNQVEESQYHRIWSKIVVVLKV. A helical transmembrane segment spans residues 80–100; that stretch reads ILLASPYLQYFVLGLGIYIHI. The Cytoplasmic segment spans residues 101–110; that stretch reads TLVQDSKAQN. Residues 111–131 traverse the membrane as a helical segment; sequence FLMSLIVLGIVIGVLRRLLIF. Topologically, residues 132 to 168 are extracellular; it reads LHLKRDRRFLKHTVNEILHITSALEQKFGMEYKCDST. Residues 169–189 traverse the membrane as a helical segment; that stretch reads LLVVYLAKLWILTVMLDSLWY. Over 190–277 the chain is Cytoplasmic; it reads KPYFLSSIFL…RDNVSWLSTS (88 aa). The chain crosses the membrane as a helical span at residues 278–298; sequence VYLMIFTCIFNAELLIECSLF. Residues 299–306 are Extracellular-facing; it reads AGDELENK. The helical transmembrane segment at 307 to 327 threads the bilayer; it reads IYIITDGCLGPVCVPILYVLI. Residues 328-396 lie on the Cytoplasmic side of the membrane; that stretch reads LGMCTDRFRD…IILDITCDRE (69 aa). The helical transmembrane segment at 397–417 threads the bilayer; sequence FVMDYIVTVILTALSLVQYTI. The Extracellular segment spans residues 418–430; it reads STGGNISECVTHK. The N-linked (GlcNAc...) asparagine glycan is linked to Asn422.

It localises to the cell membrane. The chain is Gustatory receptor-like 43a from Drosophila melanogaster (Fruit fly).